We begin with the raw amino-acid sequence, 336 residues long: Phenylalanine--tRNA ligase alpha subunit (336 aa).

Position 259 (Glu259) interacts with Mg(2+).

This sequence belongs to the class-II aminoacyl-tRNA synthetase family. Phe-tRNA synthetase alpha subunit type 1 subfamily. In terms of assembly, tetramer of two alpha and two beta subunits. Mg(2+) is required as a cofactor.

Its subcellular location is the cytoplasm. The catalysed reaction is tRNA(Phe) + L-phenylalanine + ATP = L-phenylalanyl-tRNA(Phe) + AMP + diphosphate + H(+). This Tropheryma whipplei (strain TW08/27) (Whipple's bacillus) protein is Phenylalanine--tRNA ligase alpha subunit.